The chain runs to 56 residues: uncharacterized protein (56 aa).

The next 2 membrane-spanning stretches (helical) occupy residues 5-23 and 33-55; these read VLIF…YWIY and ITAG…ILGW.

Its subcellular location is the cell membrane. This is an uncharacterized protein from Archaeoglobus fulgidus (strain ATCC 49558 / DSM 4304 / JCM 9628 / NBRC 100126 / VC-16).